The chain runs to 1390 residues: MKAPAVLAPGILVLLFTLVQRSNGECKEALAKSEMNVNMKYQLPNFTAETLIQNVILHEHHIFLGATNYIYVLNEEDLQKVAEYKTGPVLEHPDCFPCQDCSSKANLSGGVWKDNINMALVVDTYYDDQLISCGSVNRGTCQRHVFPHNHTADIQSEVHCIFSPQIEEPSQCPDCVVSALGAKVLSSVKDRFINFFVGNTINSSYFPDHPLHSISVRRLKETKDGFMFLTDQSYIDVLPEFRDSYPIKYVHAFESNNFIYFLTVQRETLDAQTFHTRIIRFCSINSGLHSYMEMPLECILTEKRKKRSTKKEVFNILQAAYVSKPGAQLARQIGASLNDDILFGVFAQSKPDSAEPMDRSAMCAFPIKYVNDFFNKIVNKNNVRCLQHFYGPNHEHCFNRTLLRNSSGCEARRDEYRTEFTTALQRVDLFMGQFSEVLLTSISTFIKGDLTIANLGTSEGRFMQVVVSRSGPSTPHVNFLLDSHPVSPEVIVEHPLNQNGYTLVVTGKKITKIPLNGLGCRHFQSCSQCLSAPPFVQCGWCHDKCVRSEECSSGTWTQQICLPAIYKVFPSSAPLEGGTRLTICGWDFGFRRNNKFDLKKTRVLLGNESCTLTLSESTMNILKCTVGPAMNKHFNMSIIISNGHGTTQYSTFSYVDPVITGISPKYGPMAGGTLLTLTGNYLNSGNSRHISIGGKTCTLKSVSNSILECYTPAQTISTEFAVKLKIDLANRETSIFSYREDPIVYEIHPTKSFISGGSTITGVGKNLNSVSVPRMVINVHEAGRNFTVACQHRSNSEIICCTTPSLQQLNLQLPLKTKAFFMLDGILSKYFDLIYVHNPVFKPFEKPVMISMGNENVLEIKGNDIDPEAVKGEVLKVGNKSCENIHLHSEAVLCTVPNDLLKLNSELNIEWKQAISSTVLGKVIVQPDQNFTGLIAGVVSISIALLLLLGFFLWLKKRKQIKDLGSELVRYDARVHTPHLDRLVSARSVSPTTEMVSNESVDYRATFPEDQFPNSSQNGSCRQVQYPLTDMSPILTSGDSDISSPLLQNTVHIDLSALNPELVQAVQHVVIGPSSLIVHFNEVIGRGHFGCVYHGTLLDNDGKKIHCAVKSLNRITDIGEVSQFLTEGIIMKDFSHPNVLSLLGICLRSEGSPLVVLPYMKHGDLRNFIRNETHNPTVKDLIGFGLQVAKGMKYLASKKFVHRDLAARNCMLDEKFTVKVADFGLARDMYDKEYYSVHNKTGAKLPVKWMALESLQTQKFTTKSDVWSFGVLLWELMTRGAPPYPDVNTFDITVYLLQGRRLLQPEYCPDPLYEVMLKCWHPKAEMRPSFSELVSRISAIFSTFIGEHYVHVNATYVNVKCVAPYPSLLSSEDNADDEVDTRPASFWETS.

A signal peptide spans 1-24 (MKAPAVLAPGILVLLFTLVQRSNG). Residues 25–932 (ECKEALAKSE…VIVQPDQNFT (908 aa)) are Extracellular-facing. One can recognise a Sema domain in the interval 27 to 515 (KEALAKSEMN…TGKKITKIPL (489 aa)). N-linked (GlcNAc...) asparagine glycosylation occurs at asparagine 45. Intrachain disulfides connect cysteine 95/cysteine 101, cysteine 98/cysteine 160, cysteine 133/cysteine 141, and cysteine 172/cysteine 175. Asparagine 106 is a glycosylation site (N-linked (GlcNAc...) asparagine). An N-linked (GlcNAc...) asparagine glycan is attached at asparagine 149. N-linked (GlcNAc...) asparagine glycosylation is present at asparagine 202. Intrachain disulfides connect cysteine 298-cysteine 363 and cysteine 385-cysteine 397. Asparagine 399 and asparagine 405 each carry an N-linked (GlcNAc...) asparagine glycan. 4 disulfides stabilise this stretch: cysteine 520–cysteine 538, cysteine 526–cysteine 561, cysteine 529–cysteine 545, and cysteine 541–cysteine 551. IPT/TIG domains lie at 563-655 (PAIY…FSYV), 657-739 (PVIT…FSYR), and 742-836 (PIVY…LIYV). Threonine 582 carries O-linked (Man) threonine glycosylation. Asparagine 607 and asparagine 635 each carry an N-linked (GlcNAc...) asparagine glycan. O-linked (Man) threonine glycans are attached at residues threonine 676 and threonine 761. N-linked (GlcNAc...) asparagine glycosylation is found at asparagine 785, asparagine 879, and asparagine 930. A helical transmembrane segment spans residues 933 to 955 (GLIAGVVSISIALLLLLGFFLWL). The Cytoplasmic segment spans residues 956–1390 (KKRKQIKDLG…TRPASFWETS (435 aa)). A Phosphoserine modification is found at serine 966. Position 977 is a phosphothreonine (threonine 977). Residues serine 990, serine 997, and serine 1000 each carry the phosphoserine modification. Tyrosine 1003 bears the Phosphotyrosine mark. The Protein kinase domain maps to 1078 to 1345 (VHFNEVIGRG…RISAIFSTFI (268 aa)). ATP-binding positions include 1084-1092 (IGRGHFGCV) and lysine 1110. Residue aspartate 1204 is the Proton acceptor of the active site. The interval 1212-1390 (LDEKFTVKVA…TRPASFWETS (179 aa)) is interaction with RANBP9. A Phosphotyrosine modification is found at tyrosine 1230. A phosphotyrosine; by autocatalysis mark is found at tyrosine 1234 and tyrosine 1235. Position 1289 is a phosphothreonine (threonine 1289). Residues 1320–1359 (WHPKAEMRPSFSELVSRISAIFSTFIGEHYVHVNATYVNV) are interaction with MUC20. Phosphotyrosine; by autocatalysis occurs at positions 1349 and 1356. The residue at position 1365 (tyrosine 1365) is a Phosphotyrosine.

Belongs to the protein kinase superfamily. Tyr protein kinase family. As to quaternary structure, heterodimer made of an alpha chain (50 kDa) and a beta chain (145 kDa) which are disulfide linked. Binds PLXNB1. Interacts when phosphorylated with downstream effectors including STAT3, PIK3R1, SRC, PCLG1, GRB2 and GAB1. Interacts with SPSB1, SPSB2 and SPSB4. Interacts with INPP5D/SHIP1. When phosphorylated at Tyr-1356, interacts with INPPL1/SHIP2. Interacts with RANBP9 and RANBP10, as well as SPSB1, SPSB2, SPSB3 and SPSB4. SPSB1 binding occurs in the presence and in the absence of HGF, however HGF treatment has a positive effect on this interaction. Interacts with MUC20; prevents interaction with GRB2 and suppresses hepatocyte growth factor-induced cell proliferation. Interacts with GRB10. Interacts with PTPN1 and PTPN2. Interacts with HSP90AA1 and HSP90AB1; the interaction suppresses MET kinase activity. Interacts with tensin TNS3. Interacts (when phosphorylated) with tensin TNS4 (via SH2 domain); the interaction increases MET protein stability by inhibiting MET endocytosis and subsequent lysosomal degradation. Autophosphorylated in response to ligand binding on Tyr-1234 and Tyr-1235 in the kinase domain leading to further phosphorylation of Tyr-1349 and Tyr-1356 in the C-terminal multifunctional docking site. Dephosphorylated by PTPRJ at Tyr-1349 and Tyr-1365. Dephosphorylated by PTPN1 and PTPN2. Post-translationally, ubiquitinated. Ubiquitination by CBL regulates the receptor stability and activity through proteasomal degradation. In terms of processing, O-mannosylation of IPT/TIG domains by TMEM260 is required for protein maturation. O-mannosylated residues are composed of single mannose glycans that are not elongated or modified.

The protein resides in the membrane. The catalysed reaction is L-tyrosyl-[protein] + ATP = O-phospho-L-tyrosyl-[protein] + ADP + H(+). With respect to regulation, in its inactive state, the C-terminal tail interacts with the catalytic domain and inhibits the kinase activity. Upon ligand binding, the C-terminal tail is displaced and becomes phosphorylated, thus increasing the kinase activity. Receptor tyrosine kinase that transduces signals from the extracellular matrix into the cytoplasm by binding to hepatocyte growth factor/HGF ligand. Regulates many physiological processes including proliferation, scattering, morphogenesis and survival. Ligand binding at the cell surface induces autophosphorylation of MET on its intracellular domain that provides docking sites for downstream signaling molecules. Following activation by ligand, interacts with the PI3-kinase subunit PIK3R1, PLCG1, SRC, GRB2, STAT3 or the adapter GAB1. Recruitment of these downstream effectors by MET leads to the activation of several signaling cascades including the RAS-ERK, PI3 kinase-AKT, or PLCgamma-PKC. The RAS-ERK activation is associated with the morphogenetic effects while PI3K/AKT coordinates prosurvival effects. During embryonic development, MET signaling plays a role in gastrulation, development and migration of muscles and neuronal precursors, angiogenesis and kidney formation. In adults, participates in wound healing as well as organ regeneration and tissue remodeling. Also promotes differentiation and proliferation of hematopoietic cells. This Pongo abelii (Sumatran orangutan) protein is Hepatocyte growth factor receptor (MET).